The primary structure comprises 393 residues: Glutamyl-tRNA reductase (393 aa).

Substrate-binding positions include 47-50, serine 98, 103-105, and glutamine 109; these read TCSR and ETD. Residue cysteine 48 is the Nucleophile of the active site. 177–182 provides a ligand contact to NADP(+); sequence GAGAVG.

The protein belongs to the glutamyl-tRNA reductase family. In terms of assembly, homodimer.

It carries out the reaction (S)-4-amino-5-oxopentanoate + tRNA(Glu) + NADP(+) = L-glutamyl-tRNA(Glu) + NADPH + H(+). The protein operates within porphyrin-containing compound metabolism; protoporphyrin-IX biosynthesis; 5-aminolevulinate from L-glutamyl-tRNA(Glu): step 1/2. Functionally, catalyzes the NADPH-dependent reduction of glutamyl-tRNA(Glu) to glutamate 1-semialdehyde (GSA). This is Glutamyl-tRNA reductase from Pyrobaculum neutrophilum (strain DSM 2338 / JCM 9278 / NBRC 100436 / V24Sta) (Thermoproteus neutrophilus).